A 281-amino-acid chain; its full sequence is Pantothenate synthetase (281 aa).

30 to 37 is a binding site for ATP; sequence MGALHAGH. His37 functions as the Proton donor in the catalytic mechanism. Residue Gln64 participates in (R)-pantoate binding. Gln64 is a binding site for beta-alanine. Residue 150 to 153 coordinates ATP; that stretch reads GKKD. Gln156 provides a ligand contact to (R)-pantoate. Residues Val179 and 187 to 190 contribute to the ATP site; that span reads YSSR.

Belongs to the pantothenate synthetase family. As to quaternary structure, homodimer.

The protein resides in the cytoplasm. It carries out the reaction (R)-pantoate + beta-alanine + ATP = (R)-pantothenate + AMP + diphosphate + H(+). It participates in cofactor biosynthesis; (R)-pantothenate biosynthesis; (R)-pantothenate from (R)-pantoate and beta-alanine: step 1/1. Functionally, catalyzes the condensation of pantoate with beta-alanine in an ATP-dependent reaction via a pantoyl-adenylate intermediate. The sequence is that of Pantothenate synthetase from Akkermansia muciniphila (strain ATCC BAA-835 / DSM 22959 / JCM 33894 / BCRC 81048 / CCUG 64013 / CIP 107961 / Muc).